Here is a 268-residue protein sequence, read N- to C-terminus: Glucosamine-6-phosphate deaminase (268 aa).

Asp67 acts as the Proton acceptor; for enolization step in catalysis. Asn137 serves as the catalytic For ring-opening step. His139 (proton acceptor; for ring-opening step) is an active-site residue. The active-site For ring-opening step is Glu144.

Belongs to the glucosamine/galactosamine-6-phosphate isomerase family. NagB subfamily. Homohexamer.

The catalysed reaction is alpha-D-glucosamine 6-phosphate + H2O = beta-D-fructose 6-phosphate + NH4(+). Its pathway is amino-sugar metabolism; N-acetylneuraminate degradation; D-fructose 6-phosphate from N-acetylneuraminate: step 5/5. Its function is as follows. Catalyzes the reversible isomerization-deamination of glucosamine 6-phosphate (GlcN6P) to form fructose 6-phosphate (Fru6P) and ammonium ion. The protein is Glucosamine-6-phosphate deaminase of Pseudoalteromonas translucida (strain TAC 125).